Reading from the N-terminus, the 251-residue chain is UPF0246 protein TM1040_2658 (251 aa).

This sequence belongs to the UPF0246 family.

The protein is UPF0246 protein TM1040_2658 of Ruegeria sp. (strain TM1040) (Silicibacter sp.).